Here is a 376-residue protein sequence, read N- to C-terminus: Glutamate 5-kinase (376 aa).

Lys16 is an ATP binding site. Substrate-binding residues include Ser56, Asp143, and Asn155. An ATP-binding site is contributed by 175-176; that stretch reads TD. The 79-residue stretch at 283 to 361 folds into the PUA domain; sequence RGALSLDEGA…RDIETTLGYV (79 aa).

This sequence belongs to the glutamate 5-kinase family.

It is found in the cytoplasm. The catalysed reaction is L-glutamate + ATP = L-glutamyl 5-phosphate + ADP. The protein operates within amino-acid biosynthesis; L-proline biosynthesis; L-glutamate 5-semialdehyde from L-glutamate: step 1/2. Its function is as follows. Catalyzes the transfer of a phosphate group to glutamate to form L-glutamate 5-phosphate. The polypeptide is Glutamate 5-kinase (Halorhodospira halophila (strain DSM 244 / SL1) (Ectothiorhodospira halophila (strain DSM 244 / SL1))).